The following is a 220-amino-acid chain: Probable transcriptional regulator NRG2 (220 aa).

C2H2-type zinc fingers lie at residues 153 to 175 (HFCK…NRIH) and 181 to 205 (HICP…YRTH).

It localises to the nucleus. Transcriptional repressor. The chain is Probable transcriptional regulator NRG2 (NRG2) from Saccharomyces cerevisiae (strain ATCC 204508 / S288c) (Baker's yeast).